A 563-amino-acid chain; its full sequence is Arginine--tRNA ligase (563 aa).

The short motif at 137-147 is the 'HIGH' region element; that stretch reads ANPTGLLHMGN.

The protein belongs to the class-I aminoacyl-tRNA synthetase family. As to quaternary structure, monomer.

The protein localises to the cytoplasm. The enzyme catalyses tRNA(Arg) + L-arginine + ATP = L-arginyl-tRNA(Arg) + AMP + diphosphate. This chain is Arginine--tRNA ligase, found in Desulforudis audaxviator (strain MP104C).